Reading from the N-terminus, the 206-residue chain is Large ribosomal subunit protein uL4 (206 aa).

The disordered stretch occupies residues 63–97; that stretch reads MYKQKGTGRARHHSARAPQFRGGGKAHGPVVRSHE. Over residues 64 to 77 the composition is skewed to basic residues; sequence YKQKGTGRARHHSA.

This sequence belongs to the universal ribosomal protein uL4 family. In terms of assembly, part of the 50S ribosomal subunit.

Functionally, one of the primary rRNA binding proteins, this protein initially binds near the 5'-end of the 23S rRNA. It is important during the early stages of 50S assembly. It makes multiple contacts with different domains of the 23S rRNA in the assembled 50S subunit and ribosome. In terms of biological role, forms part of the polypeptide exit tunnel. The sequence is that of Large ribosomal subunit protein uL4 from Rhizobium etli (strain CIAT 652).